The primary structure comprises 648 residues: MPYSHGKKLKPSLKLAKTISTSSFVSSTTSNSFSPLEDSTSASSSTSSSSSGKSVRFAAHLYTVKKFNTKLAPISISEKAASNLTRNLHNNAIPLTFPFIGGEDHRYSLDILDYSDLEYDNKDVEYDNESDVEDNAMLMHDRSMFIEKEILCFGEEETFDMADWKLVSNNLNPFKSDYKVDVTGLEDKIFKYLNGQNIKVHSLELSDPVSYEDICSNNFGNCQIWGLIFVNNLNFEKKIEIKFTLNNWADIHYINAHYNKSVTPHVDEFKFIIDISALKLNLISKNLIYTNFFERKTTCLLNLQFCCRYDVNGFEYRSFYDNNDYKNYEITISLSAINLNRAVSNSSIFNSNLGPSKMGASNAEVTMSKNNENSKKPLRKFIKDTDYYNDSPLKHKFYQSFETKAACKTEPVSQTFKAETIDCEIEPFNYFFEPPDSQTNEDMSDSSYDLSLQDFNYWEFSNHGLGKALADSDILQFKNYPKPEPFSRPPIIDDTFTLNTDDRTLGSKTQKLEDNLAKEWKSAKTRTTLNETPLHDDEHRTSFTYTTWNNSTDTLMKRKEERPVESASCSQLSIATIKAEEDLLYQDYINSGRESSSPEISPLNTTTSLPFFPGDNMSDSSGEYEERTSLSPNKIHIFRDYFYKSPSP.

The segment covering 20 to 51 has biased composition (low complexity); it reads STSSFVSSTTSNSFSPLEDSTSASSSTSSSSS. The interval 20-52 is disordered; it reads STSSFVSSTTSNSFSPLEDSTSASSSTSSSSSG. In terms of domain architecture, CBM21 spans 201–331; that stretch reads HSLELSDPVS…NNDYKNYEIT (131 aa). Positions 593 to 609 are enriched in polar residues; the sequence is RESSSPEISPLNTTTSL. A disordered region spans residues 593–629; sequence RESSSPEISPLNTTTSLPFFPGDNMSDSSGEYEERTS.

Its function is as follows. Regulates the activity of glycogen synthase. It is most probably a regulatory subunit for protein phosphatase type 1. This chain is Serine/threonine-protein phosphatase 1 regulatory subunit PIG1 (PIG1), found in Saccharomyces cerevisiae (strain ATCC 204508 / S288c) (Baker's yeast).